We begin with the raw amino-acid sequence, 114 residues long: Replication initiation control protein YabA (114 aa).

Histidine 79, cysteine 81, cysteine 95, and cysteine 98 together coordinate Zn(2+).

It belongs to the YabA family. As to quaternary structure, homotetramer. Interacts with both DnaA and DnaN, acting as a bridge between these two proteins. Zn(2+) is required as a cofactor.

Its subcellular location is the cytoplasm. It localises to the nucleoid. In terms of biological role, involved in control of chromosome replication initiation. Inhibits the cooperative binding of DnaA to the oriC region, thus negatively regulating initiation of chromosome replication. Inhibits the ability of DnaA-ATP to form a helix on DNA; does not disassemble preformed DnaA-DNA helices. Decreases the residence time of DnaA on the chromosome at its binding sites (oriC, replication forks and promoter-binding sites). Tethers DnaA to the replication machinery via the DNA polymerase beta sliding clamp subunit (dnaN). Associates with oriC and other DnaA targets on the chromosome in a DnaA-dependent manner. The chain is Replication initiation control protein YabA from Lactobacillus johnsonii (strain CNCM I-12250 / La1 / NCC 533).